Here is a 119-residue protein sequence, read N- to C-terminus: Autophagy-related protein 8A (119 aa).

Residue Gly-117 is the site of Phosphatidylethanolamine amidated glycine attachment. The propeptide at 118 to 119 (SA) is removed in mature form.

This sequence belongs to the ATG8 family. Interacts with ATG4. In terms of processing, the C-terminal 2 residues are removed by ATG4 to expose Gly-117 at the C-terminus. The C-terminal Gly is then amidated with phosphatidylethanolamine by an activating system similar to that for ubiquitin. Constitutively expressed.

It localises to the cytoplasmic vesicle. It is found in the autophagosome membrane. The protein localises to the vacuole membrane. Its subcellular location is the cytoplasm. The protein resides in the cytoskeleton. Functionally, ubiquitin-like modifier involved in cytoplasm to vacuole transport (Cvt) vesicles and autophagosomes formation. May mediate the delivery of the vesicles and autophagosomes to the vacuole via the microtubule cytoskeleton. Its function is as follows. Ubiquitin-like modifier involved in autophagosomes formation. May mediate the delivery of the autophagosomes to the vacuole via the microtubule cytoskeleton. The sequence is that of Autophagy-related protein 8A (ATG8A) from Oryza sativa subsp. indica (Rice).